The chain runs to 852 residues: Serine/threonine-protein phosphatase 6 regulatory subunit 3-A (852 aa).

Disordered regions lie at residues 610-653 (NIAF…VNHE), 714-742 (NTKETIRSSSPVEMETSTEPVDPLSVNAS), and 817-852 (DSAMENAPPTQPSSSSQEQRTSEQIVLDGASANGPV). Positions 627-638 (DSEESTDSEEEE) are enriched in acidic residues. The segment covering 714–732 (NTKETIRSSSPVEMETSTE) has biased composition (polar residues). The segment covering 828–840 (PSSSSQEQRTSEQ) has biased composition (low complexity).

It belongs to the SAPS family.

Its function is as follows. Regulatory subunit of protein phosphatase 6 (PP6). May function as a scaffolding PP6 subunit. In Xenopus laevis (African clawed frog), this protein is Serine/threonine-protein phosphatase 6 regulatory subunit 3-A (ppp6r3-a).